A 453-amino-acid chain; its full sequence is Bifunctional protein GlmU (453 aa).

The segment at 1–231 is pyrophosphorylase; it reads MERTCLAIIL…EVEMTGCNNR (231 aa). Residues 10–13, lysine 24, glutamine 77, 82–83, 105–107, glycine 143, glutamate 157, asparagine 172, and asparagine 229 each bind UDP-N-acetyl-alpha-D-glucosamine; these read LAAG, GT, and YGD. Aspartate 107 is a binding site for Mg(2+). Asparagine 229 provides a ligand contact to Mg(2+). The linker stretch occupies residues 232–252; it reads AELAFIERLWQERRRHELMLS. Positions 253–453 are N-acetyltransferase; sequence GVTMIAPETV…AIKAAKKGSH (201 aa). Residues arginine 318 and lysine 336 each coordinate UDP-N-acetyl-alpha-D-glucosamine. Histidine 348 serves as the catalytic Proton acceptor. Residues tyrosine 351 and asparagine 362 each coordinate UDP-N-acetyl-alpha-D-glucosamine. Acetyl-CoA is bound by residues alanine 365, 371–372, serine 390, serine 408, and arginine 425; that span reads NY.

The protein in the N-terminal section; belongs to the N-acetylglucosamine-1-phosphate uridyltransferase family. It in the C-terminal section; belongs to the transferase hexapeptide repeat family. Homotrimer. Mg(2+) is required as a cofactor.

It is found in the cytoplasm. The catalysed reaction is alpha-D-glucosamine 1-phosphate + acetyl-CoA = N-acetyl-alpha-D-glucosamine 1-phosphate + CoA + H(+). The enzyme catalyses N-acetyl-alpha-D-glucosamine 1-phosphate + UTP + H(+) = UDP-N-acetyl-alpha-D-glucosamine + diphosphate. Its pathway is nucleotide-sugar biosynthesis; UDP-N-acetyl-alpha-D-glucosamine biosynthesis; N-acetyl-alpha-D-glucosamine 1-phosphate from alpha-D-glucosamine 6-phosphate (route II): step 2/2. It functions in the pathway nucleotide-sugar biosynthesis; UDP-N-acetyl-alpha-D-glucosamine biosynthesis; UDP-N-acetyl-alpha-D-glucosamine from N-acetyl-alpha-D-glucosamine 1-phosphate: step 1/1. It participates in bacterial outer membrane biogenesis; LPS lipid A biosynthesis. Functionally, catalyzes the last two sequential reactions in the de novo biosynthetic pathway for UDP-N-acetylglucosamine (UDP-GlcNAc). The C-terminal domain catalyzes the transfer of acetyl group from acetyl coenzyme A to glucosamine-1-phosphate (GlcN-1-P) to produce N-acetylglucosamine-1-phosphate (GlcNAc-1-P), which is converted into UDP-GlcNAc by the transfer of uridine 5-monophosphate (from uridine 5-triphosphate), a reaction catalyzed by the N-terminal domain. The protein is Bifunctional protein GlmU of Rhizobium rhizogenes (strain K84 / ATCC BAA-868) (Agrobacterium radiobacter).